We begin with the raw amino-acid sequence, 263 residues long: MIKNQYINSDESVFNDAKALFNLNKNILLKGPTGSGKTKLAETLSAAVNTPMHQVNCSVDLDAESLLGFKTIKTNEQGQQEIVFIDGPVIKAMREGHILYIDEINMAKPETLPILNGVLDYRRQLTNPFTGEVIKAAPGFNVIAAINEGYVGTLPMNEALKNRFVVIQVDYIDGDILKDVIKQQSQLQDDAIIEQIIKFNEDLRTMSKQGQISEEAASIRALIDLSDLITVMPIERAIKRTIIDKLEDEREQQAIKNAIELNF.

31-38 (GPTGSGKT) is an ATP binding site.

This sequence belongs to the CbbQ/NirQ/NorQ/GpvN family.

This is an uncharacterized protein from Staphylococcus haemolyticus (strain JCSC1435).